The sequence spans 109 residues: Oncomodulin (109 aa).

N-acetylserine is present on serine 2. EF-hand domains follow at residues 39–74 and 78–109; these read MSAS…FESG and LTES…MVHS. Positions 52, 54, 56, 58, 63, 91, 93, 95, 97, and 102 each coordinate Ca(2+).

It belongs to the parvalbumin family. Abundant in the organ of Corti.

Has some calmodulin-like activity with respect to enzyme activation and growth regulation. Binds two calcium ions. In Cavia porcellus (Guinea pig), this protein is Oncomodulin (OCM).